The following is a 550-amino-acid chain: CTP synthase (550 aa).

The tract at residues 1–277 (MNGSADAGPR…GRAVERALGL (277 aa)) is amidoligase domain. CTP is bound at residue S23. A UTP-binding site is contributed by S23. Position 24-29 (24-29 (SLGKGI)) interacts with ATP. Y64 contributes to the L-glutamine binding site. Position 81 (D81) interacts with ATP. Positions 81 and 151 each coordinate Mg(2+). Residues 158 to 160 (DIE), 198 to 203 (KTKPTQ), and K234 each bind CTP. Residues 198–203 (KTKPTQ) and K234 contribute to the UTP site. V252 is a binding site for ATP. Residues 302–549 (KIAIAGKYVK…VEAALAYQER (248 aa)) form the Glutamine amidotransferase type-1 domain. G364 provides a ligand contact to L-glutamine. C391 (nucleophile; for glutamine hydrolysis) is an active-site residue. L-glutamine-binding positions include 392 to 395 (LGLQ), E415, and R472. Residues H522 and E524 contribute to the active site.

It belongs to the CTP synthase family. As to quaternary structure, homotetramer in the presence of UTP and ATP. Is in a protein concentration-dependent equilibrium between monomer, dimer, and tetramer in the absence of UTP and ATP.

The catalysed reaction is UTP + L-glutamine + ATP + H2O = CTP + L-glutamate + ADP + phosphate + 2 H(+). It carries out the reaction L-glutamine + H2O = L-glutamate + NH4(+). It catalyses the reaction UTP + NH4(+) + ATP = CTP + ADP + phosphate + 2 H(+). It participates in pyrimidine metabolism; CTP biosynthesis via de novo pathway; CTP from UDP: step 2/2. With respect to regulation, allosterically activated by GTP, when glutamine is the substrate. GTP has no effect on the reaction when ammonia is the substrate. The allosteric effector GTP functions by stabilizing the protein conformation that binds the tetrahedral intermediate(s) formed during glutamine hydrolysis. Inhibited by the product CTP, via allosteric rather than competitive inhibition. Its function is as follows. Catalyzes the ATP-dependent amination of UTP to CTP with either L-glutamine or ammonia as the source of nitrogen. Regulates intracellular CTP levels through interactions with the four ribonucleotide triphosphates. This chain is CTP synthase, found in Thermus thermophilus (strain ATCC 27634 / DSM 579 / HB8).